A 39-amino-acid polypeptide reads, in one-letter code: GATIMPGTLWCGKGNSAADYLQLGVWKDTAHCCRDHDGC.

Residues W10, G12, and G14 each coordinate Ca(2+). C11 and C33 are joined by a disulfide. The active site involves H36. Position 37 (D37) interacts with Ca(2+).

Ca(2+) serves as cofactor. As to expression, expressed uniformly in tentacles (at protein level).

The protein resides in the secreted. It is found in the nematocyst. The catalysed reaction is a 1,2-diacyl-sn-glycero-3-phosphocholine + H2O = a 1-acyl-sn-glycero-3-phosphocholine + a fatty acid + H(+). With respect to regulation, inhibited by morin and p-BPB. PA2 catalyzes the calcium-dependent hydrolysis of the 2-acyl groups in 3-sn-phosphoglycerides. Induces insulin secretion in isolated rat islets under high glucose concentration conditions, but not under low glucose concentration conditions. Increases perfusion pressure, renal vascular resistance, urinary flow, glomerular filtration rate, and potassium, sodium, and chloride excretion levels in rat kidney. Does not increase perfusion pressure in the rat mesenteric vascular bed. The polypeptide is Phospholipase A2 (Bunodosoma caissarum (Sea anemone)).